Reading from the N-terminus, the 107-residue chain is UPF0122 protein EAT1b_2891 (107 aa).

Belongs to the UPF0122 family.

Functionally, might take part in the signal recognition particle (SRP) pathway. This is inferred from the conservation of its genetic proximity to ftsY/ffh. May be a regulatory protein. The chain is UPF0122 protein EAT1b_2891 from Exiguobacterium sp. (strain ATCC BAA-1283 / AT1b).